Consider the following 63-residue polypeptide: Large ribosomal subunit protein uL30 (63 aa).

Belongs to the universal ribosomal protein uL30 family. As to quaternary structure, part of the 50S ribosomal subunit.

The protein is Large ribosomal subunit protein uL30 of Rickettsia typhi (strain ATCC VR-144 / Wilmington).